Here is a 209-residue protein sequence, read N- to C-terminus: Putative BTB/POZ domain-containing protein At2g40450 (209 aa).

The BTB domain maps to 24–98 (ADVRLKAGDS…IYRVDGSICS (75 aa)).

It participates in protein modification; protein ubiquitination. Its function is as follows. May act as a substrate-specific adapter of an E3 ubiquitin-protein ligase complex (CUL3-RBX1-BTB) which mediates the ubiquitination and subsequent proteasomal degradation of target proteins. The polypeptide is Putative BTB/POZ domain-containing protein At2g40450 (Arabidopsis thaliana (Mouse-ear cress)).